Reading from the N-terminus, the 398-residue chain is Flavohemoprotein (398 aa).

The Globin domain occupies 9–147 (QLTPAQIKII…LAKLLIDLEA (139 aa)). H93 lines the heme b pocket. Residues Y103 and E146 each act as charge relay system in the active site. The tract at residues 155 to 398 (WRWFKDFKVT…KLEYFGPYDP (244 aa)) is reductase. The 108-residue stretch at 156-263 (RWFKDFKVTR…APPAGNFVYD (108 aa)) folds into the FAD-binding FR-type domain. FAD-binding positions include Y196 and 212 to 215 (REYS). 276 to 281 (GIGITP) serves as a coordination point for NADP(+). 395–398 (PYDP) provides a ligand contact to FAD.

This sequence belongs to the globin family. It depends on FAD as a cofactor. Heme b is required as a cofactor.

It is found in the cytoplasm. The enzyme catalyses 2 nitric oxide + NADPH + 2 O2 = 2 nitrate + NADP(+) + H(+). It carries out the reaction 2 nitric oxide + NADH + 2 O2 = 2 nitrate + NAD(+) + H(+). With respect to regulation, inhibited by imidazoles. In terms of biological role, nitric oxide dioxygenase involved in NO detoxification in an aerobic process, termed nitric oxide dioxygenase (NOD) reaction that utilizes O(2) and NAD(P)H to convert NO to nitrate, which protects the fungus from various noxious nitrogen compounds. Therefore, plays a central role in the inducible response to nitrosative stress. Plays a role in virulence since nitric oxide is generated by macrophages of the host immune system. This is Flavohemoprotein (YHB1) from Candida albicans (strain SC5314 / ATCC MYA-2876) (Yeast).